Here is a 188-residue protein sequence, read N- to C-terminus: Protein ORFV073 (188 aa).

As to quaternary structure, interacts with host IKBKG; this interaction inhibits host NF-kappa-B pathway activation.

Its subcellular location is the host nucleus. It localises to the host cytoplasm. The protein localises to the host perinuclear region. The protein resides in the virion. Plays a role in the inhibition of the host NF-kappa-B pathway early during infection. Prevents the host RELA subunit from reaching the nucleus and activate transcription. The chain is Protein ORFV073 from Capra hircus (Goat).